Reading from the N-terminus, the 606-residue chain is Fructan 6-exohydrolase (606 aa).

A signal peptide spans 1 to 21; the sequence is MAPNNGSWLVLSISMMLLSHG. Residue Asn5 is glycosylated (N-linked (GlcNAc...) asparagine). Asp70 is a catalytic residue. N-linked (GlcNAc...) asparagine glycans are attached at residues Asn110, Asn164, Asn193, Asn237, and Asn346. Cys445 and Cys491 are oxidised to a cystine. N-linked (GlcNAc...) asparagine glycans are attached at residues Asn564, Asn585, Asn590, and Asn593.

This sequence belongs to the glycosyl hydrolase 32 family.

The catalysed reaction is Hydrolysis of terminal, non-reducing (2-&gt;6)-linked beta-D-fructofuranose residues in fructans.. Its activity is regulated as follows. Not inhibited by sucrose. Functionally, hydrolyzes levan-type beta-(2-&gt;6)-linked fructans to fructose, but not inulin-type beta-(2-&gt;1)-linked fructans. The polypeptide is Fructan 6-exohydrolase (Beta vulgaris (Sugar beet)).